The following is a 253-amino-acid chain: Phosphoadenosine 5'-phosphosulfate reductase (253 aa).

C242 acts as the Nucleophile; cysteine thiosulfonate intermediate in catalysis.

Belongs to the PAPS reductase family. CysH subfamily.

The protein localises to the cytoplasm. It catalyses the reaction [thioredoxin]-disulfide + sulfite + adenosine 3',5'-bisphosphate + 2 H(+) = [thioredoxin]-dithiol + 3'-phosphoadenylyl sulfate. The protein operates within sulfur metabolism; hydrogen sulfide biosynthesis; sulfite from sulfate: step 3/3. Functionally, catalyzes the formation of sulfite from phosphoadenosine 5'-phosphosulfate (PAPS) using thioredoxin as an electron donor. This is Phosphoadenosine 5'-phosphosulfate reductase from Vibrio cholerae serotype O1 (strain ATCC 39541 / Classical Ogawa 395 / O395).